A 167-amino-acid polypeptide reads, in one-letter code: Peptidyl-prolyl cis-trans isomerase-like 3 (167 aa).

Positions 1–153 constitute a PPIase cyclophilin-type domain; sequence MSVTLHTNLG…QEIKLLNVTV (153 aa).

It belongs to the cyclophilin-type PPIase family. PPIL3 subfamily.

The enzyme catalyses [protein]-peptidylproline (omega=180) = [protein]-peptidylproline (omega=0). Its function is as follows. PPIases accelerate the folding of proteins. It catalyzes the cis-trans isomerization of proline imidic peptide bonds in oligopeptides. The chain is Peptidyl-prolyl cis-trans isomerase-like 3 (CYP10) from Cryptococcus neoformans var. neoformans serotype D (strain B-3501A) (Filobasidiella neoformans).